The chain runs to 1331 residues: Xanthine dehydrogenase/oxidase (1331 aa).

In terms of domain architecture, 2Fe-2S ferredoxin-type spans 4–91 (DELVFFVNGK…HVAVTTVEGI (88 aa)). 8 residues coordinate [2Fe-2S] cluster: C43, C48, C51, C73, C112, C115, C147, and C149. Residues 228 to 413 (FEGERVTWIQ…LSIEIPYSKE (186 aa)) enclose the FAD-binding PCMH-type domain. Residues 256–263 (LVVGNTEI), F336, 346–350 (SIGGN), D359, L403, and K421 contribute to the FAD site. Residues C535 and C992 are joined by a disulfide bond. Positions 767 and 798 each coordinate Mo-molybdopterin. Residues E802 and R880 each coordinate substrate. R912 provides a ligand contact to Mo-molybdopterin. F914 and T1010 together coordinate substrate. A1079 is a Mo-molybdopterin binding site. The Proton acceptor role is filled by E1261.

The protein belongs to the xanthine dehydrogenase family. In terms of assembly, homodimer. Interacts with BTN1A1. The cofactor is [2Fe-2S] cluster. Requires FAD as cofactor. Mo-molybdopterin is required as a cofactor. Subject to partial proteolysis; this alters the enzyme from the dehydrogenase form (D) to the oxidase form (O). In terms of processing, contains sulfhydryl groups that are easily oxidized (in vitro); this alters the enzyme from the dehydrogenase form (D) to the oxidase form (O).

It is found in the peroxisome. It localises to the cytoplasm. Its subcellular location is the secreted. The catalysed reaction is xanthine + NAD(+) + H2O = urate + NADH + H(+). It catalyses the reaction hypoxanthine + NAD(+) + H2O = xanthine + NADH + H(+). The enzyme catalyses xanthine + O2 + H2O = urate + H2O2. With respect to regulation, can be converted from the dehydrogenase form (D) to the oxidase form (O) irreversibly by proteolysis or reversibly through the oxidation of sulfhydryl groups. In terms of biological role, key enzyme in purine degradation. Catalyzes the oxidation of hypoxanthine to xanthine. Catalyzes the oxidation of xanthine to uric acid. Contributes to the generation of reactive oxygen species. This chain is Xanthine dehydrogenase/oxidase (Xdh), found in Rattus norvegicus (Rat).